The following is a 443-amino-acid chain: Cyclin-A2-1 (443 aa).

A compositionally biased stretch (basic residues) spans 1–10 (MHRASSKHTN). The interval 1-61 (MHRASSKHTN…KRVARPSNKR (61 aa)) is disordered. Positions 11–25 (AKKEAISTSKIRDNN) are enriched in basic and acidic residues.

It belongs to the cyclin family. Cyclin AB subfamily. In terms of tissue distribution, expressed in tissues with active cell division: apical root and shoot meristems, lateral root and leaf primordia, floral meristems and developing pollen.

Its function is as follows. May negatively regulate endocycles and act as a regulator of ploidy levels in endoreduplication. The polypeptide is Cyclin-A2-1 (CYCA2-1) (Arabidopsis thaliana (Mouse-ear cress)).